The following is a 224-amino-acid chain: MLTRAPRRLVQGPRETWLLGGLWVWILCGLGMAGSPGTPQPCQAPQQWEGRQVLYQQSSGHNSRALVSYDGLNQRVRVLDERKALIPCKRLFEYILLYKDGVMFQIEQATKLCAKIPLAEPWDPLDIPQNSTFEDQYSIGGPQEQIMVQEWSDRRTARSYETWIGVYTAKDCYPVQETFIRNYTVVLSTRFFDVQLGIKDPSVFTPPSTCQTAQPEKMKENCSL.

A signal peptide spans methionine 1 to glycine 37. 3 cysteine pairs are disulfide-bonded: cysteine 42–cysteine 172, cysteine 88–cysteine 222, and cysteine 113–cysteine 210. N-linked (GlcNAc...) asparagine glycans are attached at residues asparagine 130 and asparagine 182.

It belongs to the ependymin family. In terms of assembly, homodimer. Post-translationally, N-glycosylated; the glycan contains mannose-6-phosphate moieties. Detected in brain (at protein level).

It is found in the lysosome lumen. The protein localises to the secreted. Binds anionic lipids and gangliosides at acidic pH. The polypeptide is Mammalian ependymin-related protein 1 (Epdr1) (Rattus norvegicus (Rat)).